A 430-amino-acid polypeptide reads, in one-letter code: Trigger factor (430 aa).

The region spanning 163-248 (GNIAIIDFKG…IKDIKVKELP (86 aa)) is the PPIase FKBP-type domain.

The protein belongs to the FKBP-type PPIase family. Tig subfamily.

The protein resides in the cytoplasm. The catalysed reaction is [protein]-peptidylproline (omega=180) = [protein]-peptidylproline (omega=0). Involved in protein export. Acts as a chaperone by maintaining the newly synthesized protein in an open conformation. Functions as a peptidyl-prolyl cis-trans isomerase. The protein is Trigger factor of Clostridium botulinum (strain Langeland / NCTC 10281 / Type F).